The following is a 61-amino-acid chain: Putative protein RenD (61 aa).

This Escherichia coli (strain K12) protein is Putative protein RenD (renD).